The sequence spans 198 residues: Transcription factor FapR (198 aa).

Residues 102 to 169 enclose the MaoC-like domain; sequence NRIARGHHLF…RTIVEVNSYV (68 aa).

It belongs to the FapR family.

In terms of biological role, transcriptional factor involved in regulation of membrane lipid biosynthesis by repressing genes involved in fatty acid and phospholipid metabolism. The sequence is that of Transcription factor FapR from Geobacillus sp. (strain WCH70).